A 245-amino-acid polypeptide reads, in one-letter code: tRNA1(Val) (adenine(37)-N6)-methyltransferase (245 aa).

This sequence belongs to the methyltransferase superfamily. tRNA (adenine-N(6)-)-methyltransferase family.

The protein localises to the cytoplasm. The catalysed reaction is adenosine(37) in tRNA1(Val) + S-adenosyl-L-methionine = N(6)-methyladenosine(37) in tRNA1(Val) + S-adenosyl-L-homocysteine + H(+). Its function is as follows. Specifically methylates the adenine in position 37 of tRNA(1)(Val) (anticodon cmo5UAC). This Salmonella paratyphi C (strain RKS4594) protein is tRNA1(Val) (adenine(37)-N6)-methyltransferase.